The chain runs to 226 residues: 3-dehydroquinate dehydratase (226 aa).

Residues E30–R32 and R62 each bind 3-dehydroquinate. H118 (proton donor/acceptor) is an active-site residue. K143 functions as the Schiff-base intermediate with substrate in the catalytic mechanism. R186, S205, and Q209 together coordinate 3-dehydroquinate.

The protein belongs to the type-I 3-dehydroquinase family. Homodimer.

The enzyme catalyses 3-dehydroquinate = 3-dehydroshikimate + H2O. The protein operates within metabolic intermediate biosynthesis; chorismate biosynthesis; chorismate from D-erythrose 4-phosphate and phosphoenolpyruvate: step 3/7. Its function is as follows. Involved in the third step of the chorismate pathway, which leads to the biosynthesis of aromatic amino acids. Catalyzes the cis-dehydration of 3-dehydroquinate (DHQ) and introduces the first double bond of the aromatic ring to yield 3-dehydroshikimate. In Streptococcus equi subsp. zooepidemicus (strain H70), this protein is 3-dehydroquinate dehydratase.